A 451-amino-acid polypeptide reads, in one-letter code: Lipase member H (451 aa).

Positions 1-16 are cleaved as a signal peptide; the sequence is MLRLCFFISFMCLVKS. A glycan (N-linked (GlcNAc...) asparagine) is linked at N66. The active-site Nucleophile is the S154. Residue D178 is the Charge relay system of the active site. A disulfide bridge links C233 with C246. Residue H248 is the Charge relay system of the active site. 3 disulfides stabilise this stretch: C270–C281, C284–C292, and C427–C446.

Belongs to the AB hydrolase superfamily. Lipase family. Interacts with TTMP/C3orf52. In terms of tissue distribution, expressed in placenta and colon. Weakly expressed in small intestine.

Its subcellular location is the secreted. It localises to the cell membrane. It carries out the reaction 1-hexadecanoyl-2-(9Z-octadecenoyl)-sn-glycero-3-phosphate + H2O = 2-(9Z-octadecenoyl)-sn-glycero-3-phosphate + hexadecanoate + H(+). Its function is as follows. Hydrolyzes specifically phosphatidic acid (PA) to produce 2-acyl lysophosphatidic acid (LPA; a potent bioactive lipid mediator) and fatty acid. Does not hydrolyze other phospholipids, like phosphatidylserine (PS), phosphatidylcholine (PC) and phosphatidylethanolamine (PE) or triacylglycerol (TG). This chain is Lipase member H (Liph), found in Mus musculus (Mouse).